Consider the following 152-residue polypeptide: Peptide deformylase (152 aa).

Fe cation-binding residues include cysteine 88 and histidine 130. The active site involves glutamate 131. Histidine 134 is a binding site for Fe cation.

The protein belongs to the polypeptide deformylase family. Fe(2+) serves as cofactor.

The catalysed reaction is N-terminal N-formyl-L-methionyl-[peptide] + H2O = N-terminal L-methionyl-[peptide] + formate. Its function is as follows. Removes the formyl group from the N-terminal Met of newly synthesized proteins. Requires at least a dipeptide for an efficient rate of reaction. N-terminal L-methionine is a prerequisite for activity but the enzyme has broad specificity at other positions. This Carboxydothermus hydrogenoformans (strain ATCC BAA-161 / DSM 6008 / Z-2901) protein is Peptide deformylase.